Consider the following 331-residue polypeptide: 5-dehydro-2-deoxygluconokinase (331 aa).

This sequence belongs to the carbohydrate kinase PfkB family.

It catalyses the reaction 5-dehydro-2-deoxy-D-gluconate + ATP = 6-phospho-5-dehydro-2-deoxy-D-gluconate + ADP + H(+). The protein operates within polyol metabolism; myo-inositol degradation into acetyl-CoA; acetyl-CoA from myo-inositol: step 5/7. Catalyzes the phosphorylation of 5-dehydro-2-deoxy-D-gluconate (2-deoxy-5-keto-D-gluconate or DKG) to 6-phospho-5-dehydro-2-deoxy-D-gluconate (DKGP). This Halalkalibacterium halodurans (strain ATCC BAA-125 / DSM 18197 / FERM 7344 / JCM 9153 / C-125) (Bacillus halodurans) protein is 5-dehydro-2-deoxygluconokinase.